The primary structure comprises 389 residues: MVTVNEFRKAQRAEGPATVLAIGTATPPNCVDQSAYADYYFRITNSEDKPELKEKFRRMCEKSMINTRYMHLTEDLLKQNPSFCEYMASSLDARQDIVVNEVPKLGKEAALRAIKEWGRPKSKITHLIFCTTSGVDMPGADFRLTKLLGLRPSVKRFMMYQQGCFAGGTVLRLAKDLAENNKNARVLVVCSEITVITFRGPNDTHLDSLVGQALFGDGAGAVIVGSDPVIGIEKPLFEIVSAAQTILPDSDGAIDGHLREVGLTFHLLKDVPGLISKNIRKSLVEAFKPLGISDWNSIFWIAHPGGPAILDQVETELSLKPDKLKSTRQVLRDYGNMSSACVLFILDEMRNASAKDGHRTTGEGLDWGVLFGFGPGLTVETVVLHSVPT.

The active site involves Cys-164.

The protein belongs to the thiolase-like superfamily. Chalcone/stilbene synthases family.

It catalyses the reaction (E)-4-coumaroyl-CoA + 3 malonyl-CoA + 3 H(+) = 2',4,4',6'-tetrahydroxychalcone + 3 CO2 + 4 CoA. The protein operates within secondary metabolite biosynthesis; flavonoid biosynthesis. Its function is as follows. The primary product of this enzyme is 4,2',4',6'-tetrahydroxychalcone (also termed naringenin-chalcone or chalcone) which can under specific conditions spontaneously isomerize into naringenin. In Daucus carota (Wild carrot), this protein is Chalcone synthase 9 (CHS9).